We begin with the raw amino-acid sequence, 168 residues long: Crossover junction endodeoxyribonuclease RuvC (168 aa).

Active-site residues include Asp-7, Glu-66, and Asp-138. Asp-7, Glu-66, and Asp-138 together coordinate Mg(2+).

Belongs to the RuvC family. Homodimer which binds Holliday junction (HJ) DNA. The HJ becomes 2-fold symmetrical on binding to RuvC with unstacked arms; it has a different conformation from HJ DNA in complex with RuvA. In the full resolvosome a probable DNA-RuvA(4)-RuvB(12)-RuvC(2) complex forms which resolves the HJ. The cofactor is Mg(2+).

The protein resides in the cytoplasm. It catalyses the reaction Endonucleolytic cleavage at a junction such as a reciprocal single-stranded crossover between two homologous DNA duplexes (Holliday junction).. Functionally, the RuvA-RuvB-RuvC complex processes Holliday junction (HJ) DNA during genetic recombination and DNA repair. Endonuclease that resolves HJ intermediates. Cleaves cruciform DNA by making single-stranded nicks across the HJ at symmetrical positions within the homologous arms, yielding a 5'-phosphate and a 3'-hydroxyl group; requires a central core of homology in the junction. The consensus cleavage sequence is 5'-(A/T)TT(C/G)-3'. Cleavage occurs on the 3'-side of the TT dinucleotide at the point of strand exchange. HJ branch migration catalyzed by RuvA-RuvB allows RuvC to scan DNA until it finds its consensus sequence, where it cleaves and resolves the cruciform DNA. This Cereibacter sphaeroides (strain ATCC 17023 / DSM 158 / JCM 6121 / CCUG 31486 / LMG 2827 / NBRC 12203 / NCIMB 8253 / ATH 2.4.1.) (Rhodobacter sphaeroides) protein is Crossover junction endodeoxyribonuclease RuvC.